Consider the following 107-residue polypeptide: uncharacterized protein (107 aa).

The chain crosses the membrane as a helical span at residues 13–33; sequence VLIVTFLSSFIFIVWLPVALV.

It is found in the membrane. This is an uncharacterized protein from Saccharomyces cerevisiae (strain ATCC 204508 / S288c) (Baker's yeast).